The primary structure comprises 58 residues: MSTYTVTGQFQSRDGFQPFTKDVEAENEDLARERIYTTVGSQHNRKRPQIEIKEVSAA.

The tract at residues 37–58 (TTVGSQHNRKRPQIEIKEVSAA) is disordered. Basic and acidic residues predominate over residues 48-58 (PQIEIKEVSAA).

Belongs to the eukaryotic ribosomal protein eL20 family. In terms of assembly, part of the 50S ribosomal subunit. Binds 23S rRNA.

The sequence is that of Large ribosomal subunit protein eL20 from Halorubrum lacusprofundi (strain ATCC 49239 / DSM 5036 / JCM 8891 / ACAM 34).